Here is a 314-residue protein sequence, read N- to C-terminus: NF-kappa-B inhibitor alpha (314 aa).

The disordered stretch occupies residues 1–40 (MFQPAGHGQDWAMEGPRDGLKKERLVDDRHDSGLDSMKDE). Residues 15-40 (GPRDGLKKERLVDDRHDSGLDSMKDE) are compositionally biased toward basic and acidic residues. A Glycyl lysine isopeptide (Lys-Gly) (interchain with G-Cter in SUMO); alternate cross-link involves residue K21. A Glycyl lysine isopeptide (Lys-Gly) (interchain with G-Cter in ubiquitin); alternate cross-link involves residue K21. A Glycyl lysine isopeptide (Lys-Gly) (interchain with G-Cter in ubiquitin) cross-link involves residue K22. A Destruction motif motif is present at residues 30 to 36 (HDSGLDS). At S32 the chain carries Phosphoserine; by IKKB. The residue at position 36 (S36) is a Phosphoserine; by IKKA, IKKB, IKKE and TBK1. Y42 carries the phosphotyrosine modification. The Nuclear export signal motif lies at 45 to 54 (MVKELREIRL). ANK repeat units follow at residues 73-103 (DGDS…DLAF), 110-139 (LQQT…DPEL), 143-172 (RGNT…PQHL), 182-211 (NGHT…DVNA), and 216-245 (NGRT…DVNR). The Nuclear import signal signature appears at 110-120 (LQQTPLHLAVI). A (3S)-3-hydroxyasparagine; by HIF1AN mark is found at N210 and N244. S283 and S288 each carry phosphoserine; by CK2. The residue at position 291 (T291) is a Phosphothreonine; by CK2. S293 is subject to Phosphoserine; by CK2. T296 is modified (phosphothreonine).

The protein belongs to the NF-kappa-B inhibitor family. In terms of assembly, interacts with RELA; the interaction requires the nuclear import signal. Part of a 70-90 kDa complex at least consisting of CHUK, IKBKB, NFKBIA, RELA, ELP1 and MAP3K14. Interacts with NKIRAS1 and NKIRAS2. Interacts with RWDD3; the interaction enhances sumoylation. Interacts with PRMT2. Interacts with PRKACA in platelets; this interaction is disrupted by thrombin and collagen. Interacts with MEFV. Interacts with DDRGK1; positively regulates NFKBIA phosphorylation and degradation. Interacts with HNRNPA2B1; the interaction may be mediated by the RRM2 domain of HNRNPA2B1, and HNRNPA2B1 may interact simultaneously with FAM76B and either NFKBIA or NFKBIE to form a complex. Post-translationally, phosphorylated at Ser-32 and Ser-36 by IKKA/CHUK and IKKB/IKBKB; disables inhibition of NF-kappa-B DNA-binding activity. Phosphorylation at positions 32 and 36 is prerequisite to recognition by the SCF(FBXW11) and SCF(BTRC) complexes, leading to polyubiquitination and subsequent degradation. Polyubiquitinated at Lys-21 and/or Lys-22 following phosphorylation at Ser-32 and Ser-36. Monoubiquitinated at Lys-21 and/or Lys-22 by UBE2D3. Ubiquitin chain elongation is then performed by CDC34 in cooperation with the SCF(FBXW11) E3 ligase complex, building ubiquitin chains from the UBE2D3-primed NFKBIA-linked ubiquitin. The resulting polyubiquitination leads to protein degradation. Also ubiquitinated by the SCF(BTRC) complex following stimulus-dependent phosphorylation at Ser-32 and Ser-36. Deubiquitinated by USP38, leading to NF-kappa-B inhibition. In terms of processing, sumoylated; sumoylation requires the presence of the nuclear import signal. Sumoylation blocks ubiquitination and proteasome-mediated degradation of the protein thereby increasing the protein stability. Post-translationally, hydroxylated by HIF1AN. In terms of tissue distribution, highly expressed in lymph node, thymus followed by liver, brain, muscle, kidney, gastrointestinal and reproductive tract.

The protein localises to the cytoplasm. It is found in the nucleus. Functionally, inhibits the activity of dimeric NF-kappa-B/REL complexes by trapping REL (RELA/p65 and NFKB1/p50) dimers in the cytoplasm by masking their nuclear localization signals. On cellular stimulation by immune and pro-inflammatory responses, becomes phosphorylated promoting ubiquitination and degradation, enabling the dimeric RELA to translocate to the nucleus and activate transcription. This is NF-kappa-B inhibitor alpha (Nfkbia) from Mus musculus (Mouse).